The chain runs to 402 residues: Beta-1,4-galactosyltransferase 1 (402 aa).

Topologically, residues 1 to 24 are cytoplasmic; the sequence is MKFREPLLGGSAAMPGASLQRACR. The helical; Signal-anchor for type II membrane protein transmembrane segment at 25–44 threads the bilayer; sequence LLVAVCALHLGVTLVYYLAG. Topologically, residues 45–402 are lumenal; the sequence is RDLRRLPQLV…KITVDIGTPS (358 aa). Residues 77-130 are disordered; it reads LRLRGVAPPPPLQNSSKPRSRAPSNLDAYSHPGPGPGPGSNLTSAPVPSTTTRS. Residues N90 and N117 are each glycosylated (N-linked (GlcNAc...) asparagine). The span at 116-130 shows a compositional bias: polar residues; that stretch reads SNLTSAPVPSTTTRS. The cysteines at positions 134 and 176 are disulfide-linked. Residues 187-191, 226-228, 253-254, and W314 contribute to the UDP-alpha-D-galactose site; these read PFRNR, FNR, and VD. A disulfide bridge links C247 with C266. Residue D254 participates in Mn(2+) binding. Residue 316–319 coordinates N-acetyl-D-glucosamine; sequence GEDD. Residue H347 participates in Mn(2+) binding. A UDP-alpha-D-galactose-binding site is contributed by 347-349; sequence HSR. R359 lines the N-acetyl-D-glucosamine pocket.

The protein belongs to the glycosyltransferase 7 family. In terms of assembly, homodimer; and heterodimer with alpha-lactalbumin to form lactose synthase. Interacts (via N-terminal cytoplasmic domain) with UBE2Q1 (via N-terminus); the interaction is direct. Mn(2+) serves as cofactor. The soluble form derives from the membrane forms by proteolytic processing. Detected in milk (at protein level).

The protein resides in the golgi apparatus. It localises to the golgi stack membrane. It is found in the cell membrane. The protein localises to the cell surface. Its subcellular location is the cell projection. The protein resides in the filopodium. It localises to the secreted. The enzyme catalyses D-glucose + UDP-alpha-D-galactose = lactose + UDP + H(+). It carries out the reaction an N-acetyl-beta-D-glucosaminyl derivative + UDP-alpha-D-galactose = a beta-D-galactosyl-(1-&gt;4)-N-acetyl-beta-D-glucosaminyl derivative + UDP + H(+). It catalyses the reaction N-acetyl-D-glucosamine + UDP-alpha-D-galactose = beta-D-galactosyl-(1-&gt;4)-N-acetyl-D-glucosamine + UDP + H(+). The catalysed reaction is a beta-D-GlcNAc-(1-&gt;3)-beta-D-Gal-(1-&gt;4)-beta-D-Glc-(1&lt;-&gt;1)-Cer(d18:1(4E)) + UDP-alpha-D-galactose = a neolactoside nLc4Cer(d18:1(4E)) + UDP + H(+). The enzyme catalyses a beta-D-glucosylceramide + UDP-alpha-D-galactose = a beta-D-galactosyl-(1-&gt;4)-beta-D-glucosyl-(1&lt;-&gt;1)-ceramide + UDP + H(+). It carries out the reaction a neolactoside IV(3)-beta-GlcNAc-nLc4Cer + UDP-alpha-D-galactose = a neolactoside nLc6Cer + UDP + H(+). Its pathway is protein modification; protein glycosylation. Functionally, the Golgi complex form catalyzes the production of lactose in the lactating mammary gland and could also be responsible for the synthesis of complex-type N-linked oligosaccharides in many glycoproteins as well as the carbohydrate moieties of glycolipids. The cell surface form functions as a recognition molecule during a variety of cell to cell and cell to matrix interactions, as those occurring during development and egg fertilization, by binding to specific oligosaccharide ligands on opposing cells or in the extracellular matrix. The secreted form is responsible for the synthesis of complex-type to N-linked oligosaccharides in many glycoproteins as well as the carbohydrate moieties of glycolipids. The protein is Beta-1,4-galactosyltransferase 1 (B4GALT1) of Bos taurus (Bovine).